The primary structure comprises 943 residues: Leucine--tRNA ligase (943 aa).

The short motif at 40–51 is the 'HIGH' region element; sequence PYPSGAGLHVGH. The 'KMSKS' region motif lies at 717–721; it reads KMSKS. Lysine 720 lines the ATP pocket.

Belongs to the class-I aminoacyl-tRNA synthetase family.

Its subcellular location is the cytoplasm. It catalyses the reaction tRNA(Leu) + L-leucine + ATP = L-leucyl-tRNA(Leu) + AMP + diphosphate. The chain is Leucine--tRNA ligase from Bacteroides fragilis (strain YCH46).